Consider the following 358-residue polypeptide: Mitogen-activated protein kinase 1 (358 aa).

An N-acetylalanine modification is found at alanine 2. The Protein kinase domain occupies 23–311; the sequence is YTNLSYIGEG…VEQALAHPYL (289 aa). Phosphoserine; by SGK1 is present on serine 27. Residues 29 to 37 and lysine 52 each bind ATP; that span reads IGEGAYGMV. Aspartate 147 (proton acceptor) is an active-site residue. A Phosphothreonine; by MAP2K1 and MAP2K2 modification is found at threonine 183. Residues 183-185 carry the TXY motif; it reads TEY. Tyrosine 185 carries the phosphotyrosine; by MAP2K1 and MAP2K2 modification. Threonine 188 carries the phosphothreonine; by autocatalysis modification. Phosphoserine is present on residues serine 244, serine 246, and serine 282.

Belongs to the protein kinase superfamily. CMGC Ser/Thr protein kinase family. MAP kinase subfamily. In terms of assembly, binds both upstream activators and downstream substrates in multimolecular complexes. This interaction inhibits its tyrosine-kinase activity. Interacts with ADAM15, ARHGEF2, ARRB2, DAPK1 (via death domain), HSF4, IER3, IPO7, NISCH, SGK1, and isoform 1 of NEK2. Interacts (via phosphorylated form) with TPR (via C-terminal region and phosphorylated form); the interaction requires dimerization of MAPK1/ERK2 and increases following EGF stimulation. Interacts with MAP2K1. Interacts with DUSP6. Interacts (phosphorylated form) with CAV2 ('Tyr-19'-phosphorylated form); the interaction, promoted by insulin, leads to nuclear location and MAPK1 activation. Interacts with DCC. Interacts with MORG1. Interacts with PEA15. Interacts with MKNK2. MKNK2 isoform 1 binding prevents from dephosphorylation and inactivation. The phosphorylated form interacts with PML. Interacts with STYX. Interacts with CDK2AP2. Interacts with CAVIN4. Interacts with DUSP7; the interaction enhances DUSP7 phosphatase activity. Interacts with GIT1; this interaction is necessary for MAPK1 localization to focal adhesions. Interacts with ZNF263. Interacts with phosphoglycerate kinase PGK1; the interaction is direct, occurs under hypoxic conditions, and promotes interaction between PGK1 and PIN1. The cofactor is Mg(2+). Dually phosphorylated on Thr-183 and Tyr-185, which activates the enzyme. Ligand-activated ALK induces tyrosine phosphorylation. Dephosphorylated by PTPRJ at Tyr-185. Phosphorylated upon FLT3 and KIT signaling. Dephosphorylated by DUSP1 and DUSP2 at Thr-183 and Tyr-185. In terms of processing, ISGylated. Post-translationally, ubiquitinated by TRIM15 via 'Lys-63'-linked ubiquitination; leading to activation. Deubiquitinated by CYLD. As to expression, widely expressed.

It is found in the cytoplasm. The protein resides in the cytoskeleton. Its subcellular location is the spindle. It localises to the nucleus. The protein localises to the microtubule organizing center. It is found in the centrosome. The protein resides in the membrane. Its subcellular location is the caveola. It localises to the cell junction. The protein localises to the focal adhesion. The catalysed reaction is L-seryl-[protein] + ATP = O-phospho-L-seryl-[protein] + ADP + H(+). The enzyme catalyses L-threonyl-[protein] + ATP = O-phospho-L-threonyl-[protein] + ADP + H(+). With respect to regulation, phosphorylated by MAP2K1/MEK1 and MAP2K2/MEK2 on Thr-183 and Tyr-185 in response to external stimuli like insulin or NGF. Both phosphorylations are required for activity. This phosphorylation causes dramatic conformational changes, which enable full activation and interaction of MAPK1/ERK2 with its substrates. Phosphorylation on Ser-27 by SGK1 results in its activation by enhancing its interaction with MAP2K1/MEK1 and MAP2K2/MEK2. Dephosphorylated and inactivated by DUSP1, DUSP3, DUSP6 and DUSP9. Inactivated by pyrimidylpyrrole inhibitors. In terms of biological role, serine/threonine kinase which acts as an essential component of the MAP kinase signal transduction pathway. MAPK1/ERK2 and MAPK3/ERK1 are the 2 MAPKs which play an important role in the MAPK/ERK cascade. They participate also in a signaling cascade initiated by activated KIT and KITLG/SCF. Depending on the cellular context, the MAPK/ERK cascade mediates diverse biological functions such as cell growth, adhesion, survival and differentiation through the regulation of transcription, translation, cytoskeletal rearrangements. The MAPK/ERK cascade also plays a role in initiation and regulation of meiosis, mitosis, and postmitotic functions in differentiated cells by phosphorylating a number of transcription factors. About 160 substrates have already been discovered for ERKs. Many of these substrates are localized in the nucleus, and seem to participate in the regulation of transcription upon stimulation. However, other substrates are found in the cytosol as well as in other cellular organelles, and those are responsible for processes such as translation, mitosis and apoptosis. Moreover, the MAPK/ERK cascade is also involved in the regulation of the endosomal dynamics, including lysosome processing and endosome cycling through the perinuclear recycling compartment (PNRC); as well as in the fragmentation of the Golgi apparatus during mitosis. The substrates include transcription factors (such as ATF2, BCL6, ELK1, ERF, FOS, HSF4 or SPZ1), cytoskeletal elements (such as CANX, CTTN, GJA1, MAP2, MAPT, PXN, SORBS3 or STMN1), regulators of apoptosis (such as BAD, BTG2, CASP9, DAPK1, IER3, MCL1 or PPARG), regulators of translation (such as EIF4EBP1 and FXR1) and a variety of other signaling-related molecules (like ARHGEF2, DCC, FRS2 or GRB10). Protein kinases (such as RAF1, RPS6KA1/RSK1, RPS6KA3/RSK2, RPS6KA2/RSK3, RPS6KA6/RSK4, SYK, MKNK1/MNK1, MKNK2/MNK2, RPS6KA5/MSK1, RPS6KA4/MSK2, MAPKAPK3 or MAPKAPK5) and phosphatases (such as DUSP1, DUSP4, DUSP6 or DUSP16) are other substrates which enable the propagation the MAPK/ERK signal to additional cytosolic and nuclear targets, thereby extending the specificity of the cascade. Mediates phosphorylation of TPR in response to EGF stimulation. May play a role in the spindle assembly checkpoint. Phosphorylates PML and promotes its interaction with PIN1, leading to PML degradation. Phosphorylates CDK2AP2. Phosphorylates phosphoglycerate kinase PGK1 under hypoxic conditions to promote its targeting to the mitochondrion and suppress the formation of acetyl-coenzyme A from pyruvate. Functionally, acts as a transcriptional repressor. Binds to a [GC]AAA[GC] consensus sequence. Repress the expression of interferon gamma-induced genes. Seems to bind to the promoter of CCL5, DMP1, IFIH1, IFITM1, IRF7, IRF9, LAMP3, OAS1, OAS2, OAS3 and STAT1. Transcriptional activity is independent of kinase activity. The polypeptide is Mitogen-activated protein kinase 1 (Mus musculus (Mouse)).